An 857-amino-acid chain; its full sequence is Glucans biosynthesis glucosyltransferase H (857 aa).

The next 6 membrane-spanning stretches (helical) occupy residues 142-162 (ILLTLMIGQTLVAGWYMKGIL), 196-216 (ILILFGILFCWVSAGFWTALM), 515-535 (VFLTGVMSYLSAPLWFFFLVL), 572-592 (LFSTTIVLLFLPKLLSIILIW), 606-626 (TLSMLMEMLFSMLLAPVRMIF), and 682-702 (FLWWLAPIVGSLVLSIPVSVI).

It belongs to the glycosyltransferase 2 family. OpgH subfamily.

The protein localises to the cell inner membrane. It functions in the pathway glycan metabolism; osmoregulated periplasmic glucan (OPG) biosynthesis. In terms of biological role, involved in the biosynthesis of osmoregulated periplasmic glucans (OPGs). The polypeptide is Glucans biosynthesis glucosyltransferase H (Pseudomonas putida (strain W619)).